The sequence spans 471 residues: Alpha-galactosidase (471 aa).

An N-terminal signal peptide occupies residues 1-18 (MFLLYLFTSFAAVSGVLG). A disulfide bond links Cys42 and Cys74. 2 residues coordinate substrate: Asp72 and Asp73. N-linked (GlcNAc...) asparagine glycosylation occurs at Asn82. A disulfide bridge links Cys121 with Cys151. Residue Lys147 coordinates substrate. Asp149 serves as the catalytic Nucleophile. Asn175 carries N-linked (GlcNAc...) asparagine glycosylation. Arg205 is a binding site for substrate. Asp209 serves as the catalytic Proton donor. Disulfide bonds link Cys221–Cys237 and Cys223–Cys230. A substrate-binding site is contributed by Gln251. 7 N-linked (GlcNAc...) asparagine glycosylation sites follow: Asn270, Asn403, Asn412, Asn417, Asn422, Asn435, and Asn454.

Belongs to the glycosyl hydrolase 27 family. Homotetramer.

The protein localises to the secreted. The enzyme catalyses Hydrolysis of terminal, non-reducing alpha-D-galactose residues in alpha-D-galactosides, including galactose oligosaccharides, galactomannans and galactolipids.. In Saccharomyces pastorianus (strain ATCC 76529 / Carlsberg bottom yeast no.1 / CBS 1513 / CLIB 176 / NBRC 1167 / NCYC 396 / NRRL Y-12693) (Saaz-type lager yeast), this protein is Alpha-galactosidase (MEL).